A 342-amino-acid chain; its full sequence is Tryptophan--tRNA ligase (342 aa).

Residues 19–21 (QPS) and 27–28 (GN) each bind ATP. A 'HIGH' region motif is present at residues 20-28 (PSGELTIGN). D143 is an L-tryptophan binding site. Residues 155–157 (GED), V194, and 203–207 (KMSKS) contribute to the ATP site. The 'KMSKS' region signature appears at 203–207 (KMSKS).

It belongs to the class-I aminoacyl-tRNA synthetase family. As to quaternary structure, homodimer.

The protein resides in the cytoplasm. It carries out the reaction tRNA(Trp) + L-tryptophan + ATP = L-tryptophyl-tRNA(Trp) + AMP + diphosphate + H(+). Catalyzes the attachment of tryptophan to tRNA(Trp). The polypeptide is Tryptophan--tRNA ligase (Yersinia pestis).